We begin with the raw amino-acid sequence, 401 residues long: Argininosuccinate synthase (401 aa).

ATP is bound by residues Ala-9–Ser-17 and Ala-35. The L-citrulline site is built by Tyr-88 and Ser-93. Gly-117 serves as a coordination point for ATP. Positions 119, 123, and 124 each coordinate L-aspartate. Asn-123 provides a ligand contact to L-citrulline. L-citrulline is bound by residues Arg-127 and Tyr-273.

It belongs to the argininosuccinate synthase family. Type 1 subfamily. Homotetramer.

Its subcellular location is the cytoplasm. The enzyme catalyses L-citrulline + L-aspartate + ATP = 2-(N(omega)-L-arginino)succinate + AMP + diphosphate + H(+). It participates in amino-acid biosynthesis; L-arginine biosynthesis; L-arginine from L-ornithine and carbamoyl phosphate: step 2/3. This Xylella fastidiosa (strain Temecula1 / ATCC 700964) protein is Argininosuccinate synthase.